The following is a 144-amino-acid chain: MDFGVQDIKNIIPHRYPFLLIDRVSYIEPGKKVVAYKNVTSNEYFFQGHFPEMPVMPGVLIIEALAQAGAVAILSQEEFKGKIAFFGAINKAKFRRNVVPGDTLKLEVEIIKIKGSAGIGKGTAYIGEKKAAEGELMFMIGDKN.

His49 is an active-site residue.

Belongs to the thioester dehydratase family. FabZ subfamily.

It localises to the cytoplasm. The enzyme catalyses a (3R)-hydroxyacyl-[ACP] = a (2E)-enoyl-[ACP] + H2O. In terms of biological role, involved in unsaturated fatty acids biosynthesis. Catalyzes the dehydration of short chain beta-hydroxyacyl-ACPs and long chain saturated and unsaturated beta-hydroxyacyl-ACPs. The protein is 3-hydroxyacyl-[acyl-carrier-protein] dehydratase FabZ of Clostridium kluyveri (strain NBRC 12016).